The sequence spans 321 residues: CRISPR-associated endonuclease Cas1 2 (321 aa).

Residues E150, H213, and E228 each coordinate Mn(2+).

Belongs to the CRISPR-associated endonuclease Cas1 family. As to quaternary structure, homodimer, forms a heterotetramer with a Cas2 homodimer. It depends on Mg(2+) as a cofactor. Mn(2+) serves as cofactor.

In terms of biological role, CRISPR (clustered regularly interspaced short palindromic repeat), is an adaptive immune system that provides protection against mobile genetic elements (viruses, transposable elements and conjugative plasmids). CRISPR clusters contain spacers, sequences complementary to antecedent mobile elements, and target invading nucleic acids. CRISPR clusters are transcribed and processed into CRISPR RNA (crRNA). Acts as a dsDNA endonuclease. Involved in the integration of spacer DNA into the CRISPR cassette. This is CRISPR-associated endonuclease Cas1 2 from Moorella thermoacetica (strain ATCC 39073 / JCM 9320).